The following is a 342-amino-acid chain: Ribosomal RNA small subunit methyltransferase H (342 aa).

Residues 36–38, Asp-56, Phe-82, Asp-100, and Gln-107 contribute to the S-adenosyl-L-methionine site; that span reads GGH. Positions 309-342 are disordered; the sequence is ENRESGMGKGHGAAASRFPTPDSRFPTSPNGDAP. Positions 333 to 342 are enriched in polar residues; that stretch reads FPTSPNGDAP.

Belongs to the methyltransferase superfamily. RsmH family.

The protein resides in the cytoplasm. The catalysed reaction is cytidine(1402) in 16S rRNA + S-adenosyl-L-methionine = N(4)-methylcytidine(1402) in 16S rRNA + S-adenosyl-L-homocysteine + H(+). Specifically methylates the N4 position of cytidine in position 1402 (C1402) of 16S rRNA. This chain is Ribosomal RNA small subunit methyltransferase H, found in Xanthomonas campestris pv. campestris (strain 8004).